Reading from the N-terminus, the 523-residue chain is Glucose-1-phosphate adenylyltransferase large subunit 1, chloroplastic/amyloplastic (523 aa).

The N-terminal 49 residues, 1–49, are a transit peptide targeting the chloroplast; the sequence is MSSMQFSSVLPLEGKACVSPVRREGSACERLKIGDSSSIRHERASRRMC.

It belongs to the bacterial/plant glucose-1-phosphate adenylyltransferase family. Heterotetramer. Starchy endosperm and roots.

It is found in the plastid. It localises to the chloroplast. Its subcellular location is the amyloplast. The catalysed reaction is alpha-D-glucose 1-phosphate + ATP + H(+) = ADP-alpha-D-glucose + diphosphate. It functions in the pathway glycan biosynthesis; starch biosynthesis. Its activity is regulated as follows. Highly active without 3'phosphoglycerate, and is only slightly affected by the activator 3'phosphoglycerate and inhibitor orthophosphate. Functionally, this protein plays a role in synthesis of starch. It catalyzes the synthesis of the activated glycosyl donor, ADP-glucose from Glc-1-P and ATP. The sequence is that of Glucose-1-phosphate adenylyltransferase large subunit 1, chloroplastic/amyloplastic from Hordeum vulgare (Barley).